The following is a 132-amino-acid chain: Small ribosomal subunit protein uS8 (132 aa).

Belongs to the universal ribosomal protein uS8 family. Part of the 30S ribosomal subunit. Contacts proteins S5 and S12.

Its function is as follows. One of the primary rRNA binding proteins, it binds directly to 16S rRNA central domain where it helps coordinate assembly of the platform of the 30S subunit. The polypeptide is Small ribosomal subunit protein uS8 (Rhodopseudomonas palustris (strain BisB18)).